We begin with the raw amino-acid sequence, 409 residues long: AT-rich interactive domain-containing protein 3C (409 aa).

Positions 1–14 are enriched in low complexity; the sequence is MEALQRQQAARLAQ. Residues 1-91 form a disordered region; it reads MEALQRQQAA…SPSSQSPGIQ (91 aa). Residues 19–30 show a composition bias toward pro residues; sequence LAPPRLPLPQPP. Residues 49-70 are compositionally biased toward acidic residues; sequence AEEEEGAEDEEGETPLAEEETA. The ARID domain occupies 110–202; it reads DPKRKEFLDD…YLYPYECETR (93 aa). 3 disordered regions span residues 233 to 274, 306 to 333, and 385 to 409; these read NLAG…PAHA, TREKLAPEEPPEKRAVLMGPVDSPRLGA, and PVPASLGPTNPPPLPSTGPPSSTLP. Positions 235 to 257 are enriched in low complexity; sequence AGPTPRGAPGPASSHGPAPTATP. The REKLES domain occupies 301–386; it reads LASEATREKL…GILFARRQPV (86 aa). Residues 306–320 are compositionally biased toward basic and acidic residues; the sequence is TREKLAPEEPPEKRA. A compositionally biased stretch (pro residues) spans 393–402; it reads TNPPPLPSTG.

In terms of assembly, interacts (via REKLES DOMAIN) with NPM1; the interaction mediates ARID3C nuclear shuttling.

It localises to the nucleus. In terms of biological role, transcription factor involved in monocyte-to-macrophage differentiation. Forms a complex with NPM1 to translocate to the nucleus, acting as a transcription factor that promotes the expression of the genes involved in macrophage differentiation, such as STAT3, STAT1 and JUNB. In Mus musculus (Mouse), this protein is AT-rich interactive domain-containing protein 3C (Arid3c).